The following is a 168-amino-acid chain: Putative flavin-containing monooxygenase FMO GS-OX-like 11 (168 aa).

Residue 17–22 (GAGAAG) coordinates FAD.

It belongs to the FMO family. Requires FAD as cofactor.

Catalyzes the conversion of methylthioalkyl glucosinolates of any chain length into methylsulfinylalkyl glucosinolates. The chain is Putative flavin-containing monooxygenase FMO GS-OX-like 11 from Arabidopsis thaliana (Mouse-ear cress).